Reading from the N-terminus, the 862-residue chain is DNA mismatch repair protein MutS (862 aa).

Residue 608–615 coordinates ATP; it reads GPNMAGKS.

Belongs to the DNA mismatch repair MutS family.

This protein is involved in the repair of mismatches in DNA. It is possible that it carries out the mismatch recognition step. This protein has a weak ATPase activity. In Borrelia garinii subsp. bavariensis (strain ATCC BAA-2496 / DSM 23469 / PBi) (Borreliella bavariensis), this protein is DNA mismatch repair protein MutS.